Reading from the N-terminus, the 93-residue chain is Acylphosphatase (93 aa).

Residues 7–93 (RLTAWVHGWV…TEQITGFSER (87 aa)) form the Acylphosphatase-like domain. Residues Arg22 and Asn40 contribute to the active site.

It belongs to the acylphosphatase family.

It carries out the reaction an acyl phosphate + H2O = a carboxylate + phosphate + H(+). The protein is Acylphosphatase (acyP) of Mycobacterium tuberculosis (strain ATCC 25177 / H37Ra).